A 499-amino-acid chain; its full sequence is Aspartyl/glutamyl-tRNA(Asn/Gln) amidotransferase subunit B (499 aa).

It belongs to the GatB/GatE family. GatB subfamily. Heterotrimer of A, B and C subunits.

The enzyme catalyses L-glutamyl-tRNA(Gln) + L-glutamine + ATP + H2O = L-glutaminyl-tRNA(Gln) + L-glutamate + ADP + phosphate + H(+). The catalysed reaction is L-aspartyl-tRNA(Asn) + L-glutamine + ATP + H2O = L-asparaginyl-tRNA(Asn) + L-glutamate + ADP + phosphate + 2 H(+). Allows the formation of correctly charged Asn-tRNA(Asn) or Gln-tRNA(Gln) through the transamidation of misacylated Asp-tRNA(Asn) or Glu-tRNA(Gln) in organisms which lack either or both of asparaginyl-tRNA or glutaminyl-tRNA synthetases. The reaction takes place in the presence of glutamine and ATP through an activated phospho-Asp-tRNA(Asn) or phospho-Glu-tRNA(Gln). The sequence is that of Aspartyl/glutamyl-tRNA(Asn/Gln) amidotransferase subunit B from Bartonella bacilliformis (strain ATCC 35685 / KC583 / Herrer 020/F12,63).